Consider the following 339-residue polypeptide: Putative methylthioribose-1-phosphate isomerase (339 aa).

Residues 43–45, R86, and Q191 each bind substrate; that span reads RGA. The active-site Proton donor is the D232. 241–242 lines the substrate pocket; sequence NK.

It belongs to the eIF-2B alpha/beta/delta subunits family. MtnA subfamily.

It catalyses the reaction 5-(methylsulfanyl)-alpha-D-ribose 1-phosphate = 5-(methylsulfanyl)-D-ribulose 1-phosphate. In terms of biological role, catalyzes the interconversion of methylthioribose-1-phosphate (MTR-1-P) into methylthioribulose-1-phosphate (MTRu-1-P). This is Putative methylthioribose-1-phosphate isomerase from Archaeoglobus fulgidus (strain ATCC 49558 / DSM 4304 / JCM 9628 / NBRC 100126 / VC-16).